The sequence spans 253 residues: 4-phosphopantoate--beta-alanine ligase (253 aa).

Residues R17, R39, 179 to 181, 185 to 186, and 197 to 198 each bind ATP; these read DLN, RT, and NL.

It belongs to the archaeal phosphopantothenate synthetase family. In terms of assembly, homodimer.

It catalyses the reaction (R)-4-phosphopantoate + beta-alanine + ATP = (R)-4'-phosphopantothenate + AMP + diphosphate + H(+). Its pathway is cofactor biosynthesis; coenzyme A biosynthesis. Functionally, catalyzes the condensation of (R)-4-phosphopantoate and beta-alanine to 4'-phosphopantothenate in the CoA biosynthesis pathway. This chain is 4-phosphopantoate--beta-alanine ligase, found in Methanosarcina mazei (strain ATCC BAA-159 / DSM 3647 / Goe1 / Go1 / JCM 11833 / OCM 88) (Methanosarcina frisia).